The primary structure comprises 668 residues: tRNA 5-methylaminomethyl-2-thiouridine biosynthesis bifunctional protein MnmC (668 aa).

Positions 1–245 (MKHYSIQPAN…KREMLCGVME (245 aa)) are tRNA (mnm(5)s(2)U34)-methyltransferase. Residues 270 to 668 (IGGGIASALL…LLKGKAVKAG (399 aa)) are FAD-dependent cmnm(5)s(2)U34 oxidoreductase.

The protein in the N-terminal section; belongs to the methyltransferase superfamily. tRNA (mnm(5)s(2)U34)-methyltransferase family. This sequence in the C-terminal section; belongs to the DAO family. FAD is required as a cofactor.

Its subcellular location is the cytoplasm. The enzyme catalyses 5-aminomethyl-2-thiouridine(34) in tRNA + S-adenosyl-L-methionine = 5-methylaminomethyl-2-thiouridine(34) in tRNA + S-adenosyl-L-homocysteine + H(+). Its function is as follows. Catalyzes the last two steps in the biosynthesis of 5-methylaminomethyl-2-thiouridine (mnm(5)s(2)U) at the wobble position (U34) in tRNA. Catalyzes the FAD-dependent demodification of cmnm(5)s(2)U34 to nm(5)s(2)U34, followed by the transfer of a methyl group from S-adenosyl-L-methionine to nm(5)s(2)U34, to form mnm(5)s(2)U34. This Shigella dysenteriae serotype 1 (strain Sd197) protein is tRNA 5-methylaminomethyl-2-thiouridine biosynthesis bifunctional protein MnmC.